The sequence spans 130 residues: RutC family protein HI_0719 (130 aa).

Cys-109 is an active-site residue.

It belongs to the RutC family. As to quaternary structure, homotrimer.

This is RutC family protein HI_0719 from Haemophilus influenzae (strain ATCC 51907 / DSM 11121 / KW20 / Rd).